We begin with the raw amino-acid sequence, 143 residues long: Nucleoside diphosphate kinase (143 aa).

6 residues coordinate ATP: K11, F59, R87, T93, R104, and N114. H117 serves as the catalytic Pros-phosphohistidine intermediate.

It belongs to the NDK family. In terms of assembly, homotetramer. The cofactor is Mg(2+).

The protein resides in the cytoplasm. It catalyses the reaction a 2'-deoxyribonucleoside 5'-diphosphate + ATP = a 2'-deoxyribonucleoside 5'-triphosphate + ADP. It carries out the reaction a ribonucleoside 5'-diphosphate + ATP = a ribonucleoside 5'-triphosphate + ADP. In terms of biological role, major role in the synthesis of nucleoside triphosphates other than ATP. The ATP gamma phosphate is transferred to the NDP beta phosphate via a ping-pong mechanism, using a phosphorylated active-site intermediate. The polypeptide is Nucleoside diphosphate kinase (Colwellia psychrerythraea (strain 34H / ATCC BAA-681) (Vibrio psychroerythus)).